The sequence spans 144 residues: UPF0292 protein MA_4098 (144 aa).

One can recognise a Toprim domain in the interval 28 to 109 (GAVIIVEGKR…KPELQIRNKL (82 aa)). Mg(2+)-binding residues include Glu34, Asp78, and Asp80.

It belongs to the UPF0292 family. Requires Mg(2+) as cofactor.

This chain is UPF0292 protein MA_4098, found in Methanosarcina acetivorans (strain ATCC 35395 / DSM 2834 / JCM 12185 / C2A).